A 364-amino-acid chain; its full sequence is UDP-N-acetylglucosamine--N-acetylmuramyl-(pentapeptide) pyrophosphoryl-undecaprenol N-acetylglucosamine transferase (364 aa).

Residues 10 to 12 (TGG), asparagine 126, arginine 167, serine 199, isoleucine 253, and glutamine 298 each bind UDP-N-acetyl-alpha-D-glucosamine.

It belongs to the glycosyltransferase 28 family. MurG subfamily.

The protein localises to the cell inner membrane. It carries out the reaction di-trans,octa-cis-undecaprenyl diphospho-N-acetyl-alpha-D-muramoyl-L-alanyl-D-glutamyl-meso-2,6-diaminopimeloyl-D-alanyl-D-alanine + UDP-N-acetyl-alpha-D-glucosamine = di-trans,octa-cis-undecaprenyl diphospho-[N-acetyl-alpha-D-glucosaminyl-(1-&gt;4)]-N-acetyl-alpha-D-muramoyl-L-alanyl-D-glutamyl-meso-2,6-diaminopimeloyl-D-alanyl-D-alanine + UDP + H(+). It functions in the pathway cell wall biogenesis; peptidoglycan biosynthesis. Functionally, cell wall formation. Catalyzes the transfer of a GlcNAc subunit on undecaprenyl-pyrophosphoryl-MurNAc-pentapeptide (lipid intermediate I) to form undecaprenyl-pyrophosphoryl-MurNAc-(pentapeptide)GlcNAc (lipid intermediate II). The sequence is that of UDP-N-acetylglucosamine--N-acetylmuramyl-(pentapeptide) pyrophosphoryl-undecaprenol N-acetylglucosamine transferase from Amoebophilus asiaticus (strain 5a2).